The primary structure comprises 25 residues: Small ribosomal subunit protein eS32 eS32z/eS32y/eS32x/eS32w/eS32v (25 aa).

The interval methionine 1–lysine 25 is disordered.

It belongs to the eukaryotic ribosomal protein eS32 family. In terms of assembly, component of the small ribosomal subunit (SSU).

This chain is Small ribosomal subunit protein eS32 eS32z/eS32y/eS32x/eS32w/eS32v (RPL41A), found in Arabidopsis thaliana (Mouse-ear cress).